The chain runs to 305 residues: Glutaminase (305 aa).

Positions 61, 113, 158, 165, 189, 241, and 259 each coordinate substrate.

It belongs to the glutaminase family. In terms of assembly, homotetramer.

The enzyme catalyses L-glutamine + H2O = L-glutamate + NH4(+). This chain is Glutaminase, found in Alkaliphilus oremlandii (strain OhILAs) (Clostridium oremlandii (strain OhILAs)).